A 1795-amino-acid polypeptide reads, in one-letter code: MMVFQSFILGNLVSLCMKIINSVVVVGLYYGFLTTFSIGPSYLFLLRARVMDEGEEGTEKKVSATTGFIAGQLMMFISIYYAPLHLALGRPHTITVLALPYLLFHFFWNNHKHFFDYGSTTRNEMRNLRIQCVFLNNLIFQLFNHFILPSSMLARLVNIYMFRCNNKMLFVTSSFVGWLIGHILFMKWVGLVLVWIQQNNSIRSNVLIRSNKYKFLVSELRNSMARIFSILLFITCVYYLGRIPSPIFTKKLKGTSETGGTKQDQEVSTEEAPFPSLFSEEGEDLDKIDEMEEIRVNGKDKINKDDEFHVRTYYNYKTVSENVDGNKENSNLEFFKIKKKEDHFLWFEKPFVTLVFDYKRWNRPNRYIKNDKIENTVRNEMSQYFFYTCQSDGKERISFTYPPTLSTFFEMIKKKIPSFTREKTPSDPISTYWSLINEEKKENLKKEFLNRIEALDKEWSVENILEKTTRFCHNEAKKEYLPKIYDPFLHGISRGRIKKLPPFQIITQTYRKNNIGASWINKIHGLLLKINYHKFEQTIEKFNSKSLSIEKKLSFFSEPQQEEKIDSEEEIKIFKFLFDVVRTHSNDQTRIKNFIDFYEINKKVPRWSYKLISELEELEGENEENVPMEPGIRSRKAKRVVIFTDKEPHNEIYTNLKDNQNSDQKDEMALIRYSQQSDFRREIIKGSMRSQRRKSIIWEFFQAKVHSPLFFDRKDKLFFFSFDIWGLKKKILRNFMWKNKKKKIDKKEEEQSKIEEKRRIEIAETWDSFLFAQIIRGSLLVTQSILRKYIILPLLIIIKNSVRMLLFQFPEWSEDLKDWKREMHIKCTYNGVQLSETEFPKNWLTDGIQIKILFPFYLKPWHKSKFQASQKVRLKKTKDKGEKNDFCFLTVWGMETELPFGSAQKKPSFVEPISKELKKRIKKFKTKPFLVLRIFKKRATILLKVTKEMKNWTLKNFLFIKGKIKDLSKQNLIPLFGPSEIYELNETKKDSIISNQIIHQLSVQNKSMEWTNSSLSEKKKKNLIDRIKTIRNKIDEISKEKQNLTNSCTKLRYDSKIIESSKKIWQTFKRKNTRLIRKSIFFIKFCIEQLSIAIFLGIINIQRITTQLFFESTKIILDKYIYKNDEIGEKKNKKNTIYFISTIKNLISNKKKISYDLCSLSQAYVFYKLSQIKISNFSKLKAVLEYNICITSFFVKNQIKVFFQEQGIFQYELKNKTFLNSEVNQWKNWLRSHYQYNLPQIAWARLVTEKWKKKITQDSLVLNPSLTKEDSYEKKIVDNYKKQNFFEANSLVTPKHNLKKDSIYNIFCYKSIHCTEKNVDMSISIALDNCLVSSFLEKYNIRGIGEIQYRKYLDWRILNFWFTKKVNIEPWVDTKSKQKYINTKVQNYQRIDKITKTGLANQKRNFFDWMGMNEEILNHRITNFEFVFFPEFVLFSSTYKMKPWVIPIKLLLLNFNENINVNKKITRKKKGFIQSNEKKSRRFYNLNKDEKESTGQVEFESDKEQQRNSESALSNQEKNIEENYAESTIKKRKNKKQYKSNTEAELDLFLTRYSRFQLRWNCFFNQKILDNVKVYCLLVRLKNPNEIAISSIERGEMSLDILMIEKNFTFAKLMKKGILIIEPVRLSVQNDGQLIIYRTIGISLVHKNKNKDKISKRYKKKSYIDKKKIDKSITKYQNKTVNRKKNNYDFFVPENILSPKRRREFRILICFNFKKKTARDRNSRFDKNIQNLPTVLHKKKDLDKDKKNLINLKSFLWPNFRLEDLACMNRYWFNTTNGNHFSMIRIHMYTRFPIH.

6 consecutive transmembrane segments (helical) span residues 19-39, 68-88, 91-111, 133-153, 176-196, and 227-247; these read IINS…FSIG, FIAG…HLAL, PHTI…WNNH, VFLN…SSML, VGWL…LVWI, and IFSI…PSPI. Residues 1490 to 1517 are disordered; that stretch reads EKESTGQVEFESDKEQQRNSESALSNQE. The segment covering 1508–1517 has biased composition (polar residues); the sequence is NSESALSNQE.

The protein belongs to the TIC214 family. As to quaternary structure, part of the Tic complex.

It localises to the plastid. The protein localises to the chloroplast inner membrane. Involved in protein precursor import into chloroplasts. May be part of an intermediate translocation complex acting as a protein-conducting channel at the inner envelope. The protein is Protein TIC 214 of Crucihimalaya wallichii (Rock-cress).